The chain runs to 241 residues: Protein TraL (241 aa).

It to plasmid R751 TraL.

The chain is Protein TraL (traL) from Escherichia coli.